We begin with the raw amino-acid sequence, 562 residues long: Vacuolar basic amino acid transporter 1 (562 aa).

Residues 1-30 are Vacuolar-facing; that stretch reads MQTLDETSNLLPPPEEAEAPPLEQKFHEYN. A helical membrane pass occupies residues 31 to 51; it reads LALPKFPILFSLWLGSFLSSL. The Cytoplasmic segment spans residues 52–100; sequence DSTIVANIMNRVAEEFSESSKKQWIATSFLLTNTAFQPLYGKLSDITGR. A helical membrane pass occupies residues 101-121; the sequence is KSALLTAQFFFGLGCLLTCFA. Residues 122 to 131 lie on the Vacuolar side of the membrane; it reads RNVTEFSIAR. N-linked (GlcNAc...) asparagine glycosylation is present at Asn-123. The chain crosses the membrane as a helical span at residues 132 to 152; sequence AICGIGAGGLNAISSIAVSDI. Topologically, residues 153 to 166 are cytoplasmic; the sequence is CTARERGVYQGYAN. A helical membrane pass occupies residues 167–187; that stretch reads IVFGFGQLLGAPLGGVFIETI. The Vacuolar portion of the chain corresponds to 188–190; that stretch reads GWR. A helical transmembrane segment spans residues 191-211; the sequence is ALFGIQVPVIMLCSVLAIKNI. The Cytoplasmic portion of the chain corresponds to 212-232; that stretch reads NIKLFHVPPMKERYTLKNLSR. A helical transmembrane segment spans residues 233–253; the sequence is IDIFGSLSLVATISGVLFLCS. Topologically, residues 254-255 are vacuolar; sequence SQ. The chain crosses the membrane as a helical span at residues 256 to 276; the sequence is LNKLYLALFTIGSFIVFILVE. Over 277–292 the chain is Cytoplasmic; it reads RYYATEKILPFELLTR. Residues 293–313 traverse the membrane as a helical segment; the sequence is SFCLSSAVTVISSFVVFGEIF. Topologically, residues 314 to 331 are vacuolar; sequence RSPIYLQLLQNISVTKTG. N-linked (GlcNAc...) asparagine glycosylation is present at Asn-324. A helical membrane pass occupies residues 332 to 352; it reads LFLIFPSISVAVGSLVTGWVL. The Cytoplasmic portion of the chain corresponds to 353 to 365; it reads RNTKINLAHCAYQ. A helical transmembrane segment spans residues 366–386; sequence IIFGGMIMQLLGLGLGYFLLS. Residues 387-419 lie on the Vacuolar side of the membrane; sequence HLNPDYTIYDMLESITFRSNSIWWKLIYVFASV. The helical transmembrane segment at 420 to 440 threads the bilayer; it reads LVSFGYACLLVATLVSIVFTV. At 441–448 the chain is on the cytoplasmic side; it reads EKSQQGTM. The helical transmembrane segment at 449–469 threads the bilayer; sequence TGVFYLWRSIGNVLGASLTLV. The Vacuolar segment spans residues 470-528; it reads SYENSLSSMLWNYMFKTKRDDEYHFTKKQYYSLINDSSYLRGPNFPTDIFVRILDVYKK. The N-linked (GlcNAc...) asparagine glycan is linked to Asn-504. The helical transmembrane segment at 529-549 threads the bilayer; the sequence is AFLISYIPNIALAAVGIVLSL. Residues 550–562 are Cytoplasmic-facing; the sequence is YLVKHTYKRSSSS.

This sequence belongs to the major facilitator superfamily.

The protein resides in the vacuole membrane. Transporter required for vacuolar uptake of at least histidine and lysine. The chain is Vacuolar basic amino acid transporter 1 (VBA1) from Saccharomyces cerevisiae (strain ATCC 204508 / S288c) (Baker's yeast).